The chain runs to 249 residues: 5'-nucleotidase SurE (249 aa).

4 residues coordinate a divalent metal cation: Asp8, Asp9, Ser39, and Asn91.

Belongs to the SurE nucleotidase family. Requires a divalent metal cation as cofactor.

The protein resides in the cytoplasm. The catalysed reaction is a ribonucleoside 5'-phosphate + H2O = a ribonucleoside + phosphate. Its function is as follows. Nucleotidase that shows phosphatase activity on nucleoside 5'-monophosphates. This Pseudomonas entomophila (strain L48) protein is 5'-nucleotidase SurE.